The following is a 391-amino-acid chain: Phosphoglycerate kinase (391 aa).

Substrate contacts are provided by residues 19-21 (DYN), R35, 58-61 (HMGR), R117, and R150. Residues K201, E323, and 349–352 (GGDT) each bind ATP.

Belongs to the phosphoglycerate kinase family. Monomer.

The protein resides in the cytoplasm. It carries out the reaction (2R)-3-phosphoglycerate + ATP = (2R)-3-phospho-glyceroyl phosphate + ADP. It functions in the pathway carbohydrate degradation; glycolysis; pyruvate from D-glyceraldehyde 3-phosphate: step 2/5. The chain is Phosphoglycerate kinase from Desulforapulum autotrophicum (strain ATCC 43914 / DSM 3382 / VKM B-1955 / HRM2) (Desulfobacterium autotrophicum).